We begin with the raw amino-acid sequence, 365 residues long: MEVKDIVFMNKGDGENSYVKSAGLTLKVIAKTQPMVQKAVQSLFKGTHSAPLQVVNVADLGCALGPQPLESMSIVIESIVEKCGELGCEMPEIQFHLNDLAGNDFNTLFKGLSVVQEKYKNVSWFAMGAPGSFHGRLFPRNSMHLVHSCYSVHWLSKAPKITSEEGLPLNKGKIYMSKTSPPAVKEAYLSQFEEDFSSVLRFRSPELAPDGRMVLILNGRQSADPTEKDICYLRDLLAEALSYLVSEGLIDEEKLGSFNVPYYNPSQEEVERVIDKEGSFTTEFSDTVVLEIGGKNAWSDPGLRIKGYRCFSEPVLSHQFGEEVMDKLFDKAEEILAEDYKQGKEATKNISIVVVLKKKTNQTWT.

Tyrosine 18 serves as a coordination point for S-adenosyl-L-homocysteine. A theobromine-binding site is contributed by threonine 25. Cysteine 62, glutamine 67, aspartate 99, leucine 100, serine 132, and phenylalanine 133 together coordinate S-adenosyl-L-homocysteine. Residues tyrosine 150, histidine 153, and tryptophan 154 each contribute to the theobromine site. Residues asparagine 170, phenylalanine 258, and asparagine 259 each coordinate Mg(2+). Position 311 (phenylalanine 311) interacts with theobromine.

This sequence belongs to the methyltransferase superfamily. Type-7 methyltransferase family. The cofactor is Mg(2+).

The catalysed reaction is 7-methylxanthine + S-adenosyl-L-methionine = theobromine + S-adenosyl-L-homocysteine + H(+). Its pathway is alkaloid biosynthesis. Functionally, involved in the biosynthesis of theobromine. The chain is Probable 7-methylxanthine methyltransferase 3 from Theobroma cacao (Cacao).